Here is a 176-residue protein sequence, read N- to C-terminus: Bifunctional protein PyrR (176 aa).

The PRPP-binding signature appears at 93 to 105; that stretch reads VILVDDVLYTGRT.

Belongs to the purine/pyrimidine phosphoribosyltransferase family. PyrR subfamily. Homodimer and homohexamer; in equilibrium.

The catalysed reaction is UMP + diphosphate = 5-phospho-alpha-D-ribose 1-diphosphate + uracil. In terms of biological role, regulates transcriptional attenuation of the pyrimidine nucleotide (pyr) operon by binding in a uridine-dependent manner to specific sites on pyr mRNA. This disrupts an antiterminator hairpin in the RNA and favors formation of a downstream transcription terminator, leading to a reduced expression of downstream genes. Functionally, also displays a weak uracil phosphoribosyltransferase activity which is not physiologically significant. The chain is Bifunctional protein PyrR from Streptococcus mutans serotype c (strain ATCC 700610 / UA159).